We begin with the raw amino-acid sequence, 272 residues long: Cholesterol 25-hydroxylase (272 aa).

N-linked (GlcNAc...) asparagine glycosylation is present at Asn-5. 3 helical membrane passes run 38–58 (FFPV…FVVL), 84–104 (LLPC…PVTL), and 121–141 (LLLL…EFFV). The Fatty acid hydroxylase domain occupies 129 to 263 (LFCLLLFDME…FTHWDKILGT (135 aa)). Residues 142–146 (WHLLH) carry the Histidine box-1 motif. The Histidine box-2 signature appears at 157–161 (HKVHH). Asn-163 and Asn-189 each carry an N-linked (GlcNAc...) asparagine glycan. Residues 238–244 (HHDLHHS) carry the Histidine box-3 motif.

It belongs to the sterol desaturase family. Requires Fe cation as cofactor. N-glycosylated.

The protein resides in the endoplasmic reticulum membrane. The enzyme catalyses cholesterol + AH2 + O2 = 25-hydroxycholesterol + A + H2O. The catalysed reaction is cholesterol + NADPH + O2 + H(+) = 25-hydroxycholesterol + NADP(+) + H2O. Its function is as follows. Catalyzes the formation of 25-hydroxycholesterol from cholesterol, leading to repress cholesterol biosynthetic enzymes. Plays a key role in cell positioning and movement in lymphoid tissues: 25-hydroxycholesterol is an intermediate in biosynthesis of 7-alpha,25-dihydroxycholesterol (7-alpha,25-OHC), an oxysterol that acts as a ligand for the G protein-coupled receptor GPR183/EBI2, a chemotactic receptor for a number of lymphoid cells. May play an important role in regulating lipid metabolism by synthesizing a corepressor that blocks sterol regulatory element binding protein (SREBP) processing. As an interferon-stimulated gene, has broad antiviral activities against a wide range of enveloped viruses, such as vesicular stomatitis virus (VSV) and SARS coronavirus-2 (SARS-CoV-2). Its product, 25-hydroxycholesterol, activates the ER-localized enzyme ACAT to induce internalization of accessible cholesterol on the plasma membrane and restricts SARS-CoV-2 S protein-mediated fusion which inhibits virus replication. In testis, production of 25-hydroxycholesterol by macrophages plays a role in Leydig cell differentiation. Required to restrain inflammation in macrophages: production of 25-hydroxycholesterol protects macrophages from cholesterol overload, thereby preventing mitochondrial DNA release and subsequent activation of the AIM2 inflammasome. In Homo sapiens (Human), this protein is Cholesterol 25-hydroxylase.